The following is a 121-amino-acid chain: Spermidine export protein MdtJ (121 aa).

A run of 4 helical transmembrane segments spans residues 1 to 21, 32 to 52, 55 to 75, and 82 to 102; these read MYIY…GTLS, GGFI…SFAV, IALG…ITLF, and ESLS…IVLI.

Belongs to the drug/metabolite transporter (DMT) superfamily. Small multidrug resistance (SMR) (TC 2.A.7.1) family. MdtJ subfamily. In terms of assembly, forms a complex with MdtI.

It is found in the cell inner membrane. Its function is as follows. Catalyzes the excretion of spermidine. The sequence is that of Spermidine export protein MdtJ from Escherichia coli O127:H6 (strain E2348/69 / EPEC).